The following is a 231-amino-acid chain: Large ribosomal subunit protein uL1 (231 aa).

It belongs to the universal ribosomal protein uL1 family. Part of the 50S ribosomal subunit.

Its function is as follows. Binds directly to 23S rRNA. The L1 stalk is quite mobile in the ribosome, and is involved in E site tRNA release. In terms of biological role, protein L1 is also a translational repressor protein, it controls the translation of the L11 operon by binding to its mRNA. The polypeptide is Large ribosomal subunit protein uL1 (Acidovorax ebreus (strain TPSY) (Diaphorobacter sp. (strain TPSY))).